The sequence spans 474 residues: tRNA-2-methylthio-N(6)-dimethylallyladenosine synthase (474 aa).

The MTTase N-terminal domain maps to 3–120 (KKLHIKTWGC…LPEMIEQIQQ (118 aa)). [4Fe-4S] cluster is bound by residues cysteine 12, cysteine 49, cysteine 83, cysteine 157, cysteine 161, and cysteine 164. The 233-residue stretch at 143-375 (RAEGPSAFVS…QDRITQQAMR (233 aa)) folds into the Radical SAM core domain. In terms of domain architecture, TRAM spans 378–441 (RQMLGTVQRI…TNSLRGKFIR (64 aa)).

This sequence belongs to the methylthiotransferase family. MiaB subfamily. In terms of assembly, monomer. Requires [4Fe-4S] cluster as cofactor.

The protein localises to the cytoplasm. The enzyme catalyses N(6)-dimethylallyladenosine(37) in tRNA + (sulfur carrier)-SH + AH2 + 2 S-adenosyl-L-methionine = 2-methylsulfanyl-N(6)-dimethylallyladenosine(37) in tRNA + (sulfur carrier)-H + 5'-deoxyadenosine + L-methionine + A + S-adenosyl-L-homocysteine + 2 H(+). In terms of biological role, catalyzes the methylthiolation of N6-(dimethylallyl)adenosine (i(6)A), leading to the formation of 2-methylthio-N6-(dimethylallyl)adenosine (ms(2)i(6)A) at position 37 in tRNAs that read codons beginning with uridine. The protein is tRNA-2-methylthio-N(6)-dimethylallyladenosine synthase of Shewanella loihica (strain ATCC BAA-1088 / PV-4).